Here is a 551-residue protein sequence, read N- to C-terminus: Dihydroxy-acid dehydratase (551 aa).

Position 52 (Cys52) interacts with [2Fe-2S] cluster. Position 84 (Asp84) interacts with Mg(2+). Cys125 contributes to the [2Fe-2S] cluster binding site. Asp126 and Lys127 together coordinate Mg(2+). Lys127 carries the N6-carboxylysine modification. Cys197 is a [2Fe-2S] cluster binding site. Glu448 lines the Mg(2+) pocket. Residue Ser474 is the Proton acceptor of the active site.

The protein belongs to the IlvD/Edd family. Homodimer. [2Fe-2S] cluster is required as a cofactor. Requires Mg(2+) as cofactor.

It catalyses the reaction (2R)-2,3-dihydroxy-3-methylbutanoate = 3-methyl-2-oxobutanoate + H2O. The enzyme catalyses (2R,3R)-2,3-dihydroxy-3-methylpentanoate = (S)-3-methyl-2-oxopentanoate + H2O. It participates in amino-acid biosynthesis; L-isoleucine biosynthesis; L-isoleucine from 2-oxobutanoate: step 3/4. The protein operates within amino-acid biosynthesis; L-valine biosynthesis; L-valine from pyruvate: step 3/4. Functions in the biosynthesis of branched-chain amino acids. Catalyzes the dehydration of (2R,3R)-2,3-dihydroxy-3-methylpentanoate (2,3-dihydroxy-3-methylvalerate) into 2-oxo-3-methylpentanoate (2-oxo-3-methylvalerate) and of (2R)-2,3-dihydroxy-3-methylbutanoate (2,3-dihydroxyisovalerate) into 2-oxo-3-methylbutanoate (2-oxoisovalerate), the penultimate precursor to L-isoleucine and L-valine, respectively. This chain is Dihydroxy-acid dehydratase, found in Francisella tularensis subsp. tularensis (strain FSC 198).